Reading from the N-terminus, the 321-residue chain is Nucleus-vacuole junction protein 1 (321 aa).

A signal peptide spans 1-22; that stretch reads MTRPPLVRGIFSLGLSVAVLKG. Residues 73 to 125 form a TSC13-binding region; that stretch reads ELSWRKVFNFISRQSSELDTRIYVLILLLSFLLPIAWTVLDGDRETTLEDKDN. A helical transmembrane segment spans residues 94 to 114; it reads IYVLILLLSFLLPIAWTVLDG. Residues 139–195 are OSH1-binding; that stretch reads KHYNDGERAVLQFGKNRSEPIILSYKDMNVLEGEHEFTSKEEHSNSHLTSKSENALN. Residues Ser156 and Ser199 each carry the phosphoserine modification. A disordered region spans residues 211–275; it reads LEEDKNEPNG…SLKSSTSFPI (65 aa). Residues 233-321 form a VAC8-binding region; it reads DCSSSSEVES…EQAYSQPFRY (89 aa). The segment covering 242–262 has biased composition (basic and acidic residues); the sequence is SQSKCRKESTAEPDSLSRDTR. The segment covering 263 to 272 has biased composition (low complexity); it reads TTSSLKSSTS. Phosphoserine is present on residues Ser285 and Ser298. Positions 299 to 321 are disordered; sequence PTKSSNLDAQVNTEQAYSQPFRY.

Interacts with OSH1, TSC13 and VAC8.

The protein resides in the nucleus outer membrane. Its function is as follows. Involved in the formation of nucleus-vacuole junctions (NVJs) during piecemeal microautophagy of the nucleus (PMN). NVJs are interorganelle interfaces mediated by NVJ1 in the nuclear envelope and VAC8 on the vacuole membrane. Together, NVJ1 and VAC8 form Velcro-like patches through which teardrop-like portions of the nucleus are pinched off into the vacuolar lumen and degraded by the PMN process. Also acts as an outer-nuclear membrane receptor for OSH1 and TSC13. The protein is Nucleus-vacuole junction protein 1 (NVJ1) of Saccharomyces cerevisiae (strain ATCC 204508 / S288c) (Baker's yeast).